We begin with the raw amino-acid sequence, 402 residues long: Phytoene synthase 2, chloroplastic (402 aa).

The transit peptide at 1-54 (MAAGSSAVWAAQHPACSGGKFHHLSPSHSHCRPRRALQTPPALPARRSGASPPR) directs the protein to the chloroplast. The segment covering 20 to 35 (KFHHLSPSHSHCRPRR) has biased composition (basic residues). The tract at residues 20 to 54 (KFHHLSPSHSHCRPRRALQTPPALPARRSGASPPR) is disordered. A compositionally biased stretch (low complexity) spans 44–54 (PARRSGASPPR).

It belongs to the phytoene/squalene synthase family. Expressed in leaves and endosperm.

The protein resides in the plastid. The protein localises to the chloroplast. It localises to the plastoglobule. The enzyme catalyses 2 (2E,6E,10E)-geranylgeranyl diphosphate = 15-cis-phytoene + 2 diphosphate. Catalyzes the conversion of geranylgeranyl diphosphate to phytoene. Mediates the first committed step in carotenoid biosynthesis. In Zea mays (Maize), this protein is Phytoene synthase 2, chloroplastic.